Consider the following 255-residue polypeptide: Indole-3-glycerol phosphate synthase (255 aa).

This sequence belongs to the TrpC family.

It carries out the reaction 1-(2-carboxyphenylamino)-1-deoxy-D-ribulose 5-phosphate + H(+) = (1S,2R)-1-C-(indol-3-yl)glycerol 3-phosphate + CO2 + H2O. It participates in amino-acid biosynthesis; L-tryptophan biosynthesis; L-tryptophan from chorismate: step 4/5. In Streptococcus thermophilus (strain ATCC BAA-250 / LMG 18311), this protein is Indole-3-glycerol phosphate synthase.